We begin with the raw amino-acid sequence, 227 residues long: Phosphoribosylformylglycinamidine synthase subunit PurQ (227 aa).

The region spanning 3-225 (FAVIVFPGSN…VKQGAHHVKT (223 aa)) is the Glutamine amidotransferase type-1 domain. Cys86 functions as the Nucleophile in the catalytic mechanism. Active-site residues include His194 and Glu196.

Part of the FGAM synthase complex composed of 1 PurL, 1 PurQ and 2 PurS subunits.

It localises to the cytoplasm. The enzyme catalyses N(2)-formyl-N(1)-(5-phospho-beta-D-ribosyl)glycinamide + L-glutamine + ATP + H2O = 2-formamido-N(1)-(5-O-phospho-beta-D-ribosyl)acetamidine + L-glutamate + ADP + phosphate + H(+). It carries out the reaction L-glutamine + H2O = L-glutamate + NH4(+). Its pathway is purine metabolism; IMP biosynthesis via de novo pathway; 5-amino-1-(5-phospho-D-ribosyl)imidazole from N(2)-formyl-N(1)-(5-phospho-D-ribosyl)glycinamide: step 1/2. Part of the phosphoribosylformylglycinamidine synthase complex involved in the purines biosynthetic pathway. Catalyzes the ATP-dependent conversion of formylglycinamide ribonucleotide (FGAR) and glutamine to yield formylglycinamidine ribonucleotide (FGAM) and glutamate. The FGAM synthase complex is composed of three subunits. PurQ produces an ammonia molecule by converting glutamine to glutamate. PurL transfers the ammonia molecule to FGAR to form FGAM in an ATP-dependent manner. PurS interacts with PurQ and PurL and is thought to assist in the transfer of the ammonia molecule from PurQ to PurL. This is Phosphoribosylformylglycinamidine synthase subunit PurQ from Exiguobacterium sibiricum (strain DSM 17290 / CCUG 55495 / CIP 109462 / JCM 13490 / 255-15).